A 202-amino-acid chain; its full sequence is MRLRFNKNAETSLMASPMTFKDFPIDNKKNTILEIGMGRGTMLTKLALMHPDIEYIGLEKYSTPAYSALKKAIDLNLENFHIIIGDAINLSTYFKNKIKTIWLTFSDPWPKKRHYKRRLVYRDFLKIYQNVLDKDGVVYFKTDNDMLYQFAIDELKEINAKIIYQTSDLHHCNFKIENVFTDYEEKFNKLNKNINFIAFTFN.

S-adenosyl-L-methionine-binding residues include E34, E59, D86, and D107. Residue D107 is part of the active site. Substrate is bound by residues K111, D143, and T181–E184.

It belongs to the class I-like SAM-binding methyltransferase superfamily. TrmB family.

It carries out the reaction guanosine(46) in tRNA + S-adenosyl-L-methionine = N(7)-methylguanosine(46) in tRNA + S-adenosyl-L-homocysteine. The protein operates within tRNA modification; N(7)-methylguanine-tRNA biosynthesis. Functionally, catalyzes the formation of N(7)-methylguanine at position 46 (m7G46) in tRNA. The protein is tRNA (guanine-N(7)-)-methyltransferase of Metamycoplasma hominis (strain ATCC 23114 / DSM 25592 / NBRC 14850 / NCTC 10111 / PG21) (Mycoplasma hominis).